The chain runs to 60 residues: Short neurotoxin C (60 aa).

Intrachain disulfides connect C3-C22, C17-C39, C41-C52, and C53-C58.

This sequence belongs to the three-finger toxin family. Short-chain subfamily. Type I alpha-neurotoxin sub-subfamily. As to expression, expressed by the venom gland.

The protein resides in the secreted. Binds to muscle nicotinic acetylcholine receptor (nAChR) and inhibit acetylcholine from binding to the receptor, thereby impairing neuromuscular transmission. The sequence is that of Short neurotoxin C from Aipysurus laevis (Olive sea snake).